We begin with the raw amino-acid sequence, 632 residues long: MTHEFTESYDVIVIGAGHAGVEASLATSRMGCKTLLATINLDMLAFMPCNPSIGGSAKGIVVREIDALGGEMGKNIDKTYIQMKMLNTGKGPAVRALRAQADKSLYAREMKHTVEKQANLTLRQTMIDDILVEDGRVVGVLTATGQKFAAKAVVVTTGTALRGEIILGELKYSSGPNNSLASVTLADNLKKLGLEIGRFKTGTPPRVKASSINYDQTEIQPGDDKPNHFSFMSKDADYLKDQIPCWLTYTNQTSHDIINQNLYRAPMFSGIVKGVGPRYCPSIEDKIVRFADKERHQLFLEPEGRDTEEVYVQGLSTSLPEDVQKDLIHSIKGLEKAEMMRTGYAIEYDIVLPHQLRATLETKLISGLFTAGQTNGTSGYEEAAGQGLIAGINAALKVQGKSELILKRSDAYIGVMIDDLVTKGTLEPYRLLTSRAEYRLILRHDNADMRLTEIGRDIGLVDDERWKAFEIKKNQFDNELKRLNSIKLKPVKATNDRVQELGFKPLTDAMTAKEFMRRPEIDYAIAVSFVGPAAEDLDAKIIELLETEIKYEGYIRKALDQVAKMKRMEEKRIPANIDWDAIDSIATEARQKFKKINPETIGQASRISGVNPADISILMIYLEGNGKAHRKY.

FAD is bound by residues 15-20, isoleucine 127, and serine 182; that span reads GAGHAG. Residue 276–290 participates in NAD(+) binding; that stretch reads GPRYCPSIEDKIVRF. Position 373 (glutamine 373) interacts with FAD.

The protein belongs to the MnmG family. As to quaternary structure, homodimer. Heterotetramer of two MnmE and two MnmG subunits. Requires FAD as cofactor.

It is found in the cytoplasm. NAD-binding protein involved in the addition of a carboxymethylaminomethyl (cmnm) group at the wobble position (U34) of certain tRNAs, forming tRNA-cmnm(5)s(2)U34. The chain is tRNA uridine 5-carboxymethylaminomethyl modification enzyme MnmG from Streptococcus pyogenes serotype M3 (strain SSI-1).